Consider the following 140-residue polypeptide: Aspartate 1-decarboxylase (140 aa).

Ser25 acts as the Schiff-base intermediate with substrate; via pyruvic acid in catalysis. Ser25 carries the pyruvic acid (Ser) modification. Thr57 is a substrate binding site. The active-site Proton donor is the Tyr58. 73 to 75 is a substrate binding site; it reads GAA.

The protein belongs to the PanD family. Heterooctamer of four alpha and four beta subunits. Requires pyruvate as cofactor. In terms of processing, is synthesized initially as an inactive proenzyme, which is activated by self-cleavage at a specific serine bond to produce a beta-subunit with a hydroxyl group at its C-terminus and an alpha-subunit with a pyruvoyl group at its N-terminus.

It is found in the cytoplasm. The enzyme catalyses L-aspartate + H(+) = beta-alanine + CO2. The protein operates within cofactor biosynthesis; (R)-pantothenate biosynthesis; beta-alanine from L-aspartate: step 1/1. In terms of biological role, catalyzes the pyruvoyl-dependent decarboxylation of aspartate to produce beta-alanine. This chain is Aspartate 1-decarboxylase, found in Persephonella marina (strain DSM 14350 / EX-H1).